The chain runs to 200 residues: Protein GrpE (200 aa).

It belongs to the GrpE family. In terms of assembly, homodimer.

The protein localises to the cytoplasm. Functionally, participates actively in the response to hyperosmotic and heat shock by preventing the aggregation of stress-denatured proteins, in association with DnaK and GrpE. It is the nucleotide exchange factor for DnaK and may function as a thermosensor. Unfolded proteins bind initially to DnaJ; upon interaction with the DnaJ-bound protein, DnaK hydrolyzes its bound ATP, resulting in the formation of a stable complex. GrpE releases ADP from DnaK; ATP binding to DnaK triggers the release of the substrate protein, thus completing the reaction cycle. Several rounds of ATP-dependent interactions between DnaJ, DnaK and GrpE are required for fully efficient folding. The polypeptide is Protein GrpE (Shewanella piezotolerans (strain WP3 / JCM 13877)).